Reading from the N-terminus, the 338-residue chain is Ketol-acid reductoisomerase (NADP(+)) (338 aa).

One can recognise a KARI N-terminal Rossmann domain in the interval 1 to 181; sequence MKVYYDKDAD…GGTKGGVIET (181 aa). NADP(+) contacts are provided by residues 24-27, Arg47, and Ser52; that span reads YGSQ. His107 is a catalytic residue. Position 133 (Gly133) interacts with NADP(+). The KARI C-terminal knotted domain occupies 182–327; the sequence is NFREETETDL…GQLRDMMPWI (146 aa). Mg(2+) is bound by residues Asp190, Glu194, Glu226, and Glu230. Position 251 (Ser251) interacts with substrate.

This sequence belongs to the ketol-acid reductoisomerase family. It depends on Mg(2+) as a cofactor.

It catalyses the reaction (2R)-2,3-dihydroxy-3-methylbutanoate + NADP(+) = (2S)-2-acetolactate + NADPH + H(+). The enzyme catalyses (2R,3R)-2,3-dihydroxy-3-methylpentanoate + NADP(+) = (S)-2-ethyl-2-hydroxy-3-oxobutanoate + NADPH + H(+). Its pathway is amino-acid biosynthesis; L-isoleucine biosynthesis; L-isoleucine from 2-oxobutanoate: step 2/4. The protein operates within amino-acid biosynthesis; L-valine biosynthesis; L-valine from pyruvate: step 2/4. Functionally, involved in the biosynthesis of branched-chain amino acids (BCAA). Catalyzes an alkyl-migration followed by a ketol-acid reduction of (S)-2-acetolactate (S2AL) to yield (R)-2,3-dihydroxy-isovalerate. In the isomerase reaction, S2AL is rearranged via a Mg-dependent methyl migration to produce 3-hydroxy-3-methyl-2-ketobutyrate (HMKB). In the reductase reaction, this 2-ketoacid undergoes a metal-dependent reduction by NADPH to yield (R)-2,3-dihydroxy-isovalerate. The chain is Ketol-acid reductoisomerase (NADP(+)) from Dechloromonas aromatica (strain RCB).